The primary structure comprises 592 residues: Tetrathionate sensor histidine kinase TtrS (592 aa).

2 consecutive transmembrane segments (helical) span residues 11–31 (VLAAVGLLCHGAWAGTWNIGI) and 307–327 (VGGVILAFLLLTLNYIWVMLL). In terms of domain architecture, Histidine kinase spans 364–581 (GFAHELNQPL…VVTIHFLHEN (218 aa)). His-367 carries the post-translational modification Phosphohistidine; by autocatalysis.

In terms of processing, autophosphorylated.

It localises to the cell inner membrane. The catalysed reaction is ATP + protein L-histidine = ADP + protein N-phospho-L-histidine.. Functionally, member of the two-component regulatory system TtrR/TtrS, which is required for synthesis of tetrathionate reductase. Probably functions as a sensor protein kinase which is autophosphorylated at a histidine residue in response to tetrathionate, and transfers its phosphate group to TtrR. During mice infection, the ability to use tetrathionate as an electron acceptor is a growth advantage for S.typhimurium over the competing microbiota in the lumen of the inflamed gut. The sequence is that of Tetrathionate sensor histidine kinase TtrS (ttrS) from Salmonella typhimurium (strain LT2 / SGSC1412 / ATCC 700720).